We begin with the raw amino-acid sequence, 902 residues long: Protein translocase subunit SecA (902 aa).

ATP-binding positions include Gln-87, 105–109 (GEGKT), and Asp-512. The disordered stretch occupies residues 847 to 902 (DAERLARQQQLSHLDDQSAAAQEMASQTGDRKIGRNDPCPCGSGKKYKQCHGRLNA). Zn(2+) is bound by residues Cys-885, Cys-887, Cys-896, and His-897. The segment covering 891-902 (KKYKQCHGRLNA) has biased composition (basic residues).

The protein belongs to the SecA family. Monomer and homodimer. Part of the essential Sec protein translocation apparatus which comprises SecA, SecYEG and auxiliary proteins SecDF-YajC and YidC. Requires Zn(2+) as cofactor.

It localises to the cell inner membrane. It is found in the cytoplasm. It catalyses the reaction ATP + H2O + cellular proteinSide 1 = ADP + phosphate + cellular proteinSide 2.. Its function is as follows. Part of the Sec protein translocase complex. Interacts with the SecYEG preprotein conducting channel. Has a central role in coupling the hydrolysis of ATP to the transfer of proteins into and across the cell membrane, serving both as a receptor for the preprotein-SecB complex and as an ATP-driven molecular motor driving the stepwise translocation of polypeptide chains across the membrane. The sequence is that of Protein translocase subunit SecA from Edwardsiella ictaluri (strain 93-146).